Here is a 108-residue protein sequence, read N- to C-terminus: UPF0145 protein Tmel_1129 (108 aa).

Belongs to the UPF0145 family.

This Thermosipho melanesiensis (strain DSM 12029 / CIP 104789 / BI429) protein is UPF0145 protein Tmel_1129.